A 350-amino-acid polypeptide reads, in one-letter code: Secreted effector protein PipB2 (350 aa).

4 consecutive Pentapeptide repeat domains span residues 162-201, 202-241, 247-286, and 287-326; these read ANLT…NLSG, TSLG…SLLG, CNCS…IMED, and AVLT…TLTH.

In terms of assembly, interacts with the host kinesin light chain (KLC), a subunit of the kinesin-1 motor complex.

The protein localises to the secreted. It is found in the host membrane. In terms of biological role, effector proteins function to alter host cell physiology and promote bacterial survival in host tissues. Involved in the reorganization of late endosome/lysosome (LE/Lys) compartments in mammalian cells. Necessary and sufficient to link kinesin-1 onto the Salmonella-containing vacuole (SCV) membrane. Required for centrifugal extension of lysosomal glycoprotein-rich membrane tubules, known as Salmonella-induced filaments (Sifs), away from the SCV and toward the cell periphery. Required for virulence, but not for intracellular survival and replication in phagocytic cells. The protein is Secreted effector protein PipB2 (pipB2) of Salmonella choleraesuis (strain SC-B67).